A 136-amino-acid polypeptide reads, in one-letter code: Large-conductance mechanosensitive channel (136 aa).

Transmembrane regions (helical) follow at residues 9 to 29 (AFASRGNVIDMAVGIIIGAAF), 32 to 52 (IVSSFVADIIMPPIGIILGGV), 54 to 74 (FSDLSFVLLAAQGDAPAVVIA), and 79 to 99 (IQTVVDFTIIAFAIFMGLKAI).

Belongs to the MscL family. As to quaternary structure, homopentamer.

The protein resides in the cell inner membrane. Its function is as follows. Channel that opens in response to stretch forces in the membrane lipid bilayer. May participate in the regulation of osmotic pressure changes within the cell. The chain is Large-conductance mechanosensitive channel from Vibrio cholerae serotype O1 (strain ATCC 39541 / Classical Ogawa 395 / O395).